The sequence spans 59 residues: UPF0434 protein SO_2800 (59 aa).

Belongs to the UPF0434 family.

The protein is UPF0434 protein SO_2800 of Shewanella oneidensis (strain ATCC 700550 / JCM 31522 / CIP 106686 / LMG 19005 / NCIMB 14063 / MR-1).